Reading from the N-terminus, the 162-residue chain is Caveolin-2 (162 aa).

Residues 1 to 86 (MGLETEKADV…FEMSKYVIYK (86 aa)) lie on the Cytoplasmic side of the membrane. Tyr-19 carries the phosphotyrosine; by SRC modification. Phosphoserine is present on residues Ser-20 and Ser-23. Tyr-27 carries the phosphotyrosine; by SRC modification. Residues 87–107 (FLTVFLAIPLAFAAGILFATL) constitute an intramembrane region (helical). At 108–162 (SCLHIWIIMPFVKTCLMVLPSVQTIWKSVTDVVIAPLCTSIGRSFSSVSLQLSHD) the chain is on the cytoplasmic side.

This sequence belongs to the caveolin family. In terms of assembly, monomer or homodimer. Interacts with CAV1; the interaction forms a stable heterooligomeric complex that is required for targeting to lipid rafts and for caveolae formation. Tyrosine phosphorylated forms do not form heterooligomers with the Tyr-19-phosphorylated form existing as a monomer or dimer, and the Tyr-27-form as a monomer only. Interacts (tyrosine phosphorylated form) with the SH2 domain-containing proteins, RASA1, NCK1 and SRC. Interacts (tyrosine phosphorylated form) with INSR, the interaction (Tyr-27-phosphorylated form) is increased on insulin stimulation. Interacts (Tyr-19 phosphorylated form) with MAPK1 (phosphorylated form); the interaction, promoted by insulin, leads to nuclear location and MAPK1 activation. Interacts with STAT3; the interaction is increased on insulin-induced tyrosine phosphorylation leading to STAT activation. Post-translationally, phosphorylated on serine and tyrosine residues. CAV1 promotes phosphorylation on Ser-23 which then targets the complex to the plasma membrane, lipid rafts and caveolae. Phosphorylation on both Tyr-19 and Tyr-27 is required for insulin-induced 'Ser-727' phosphorylation of STAT3 and its activation. Phosphorylation on Tyr-19 is required for insulin-induced phosphorylation of MAPK1 and DNA binding of STAT3. Tyrosine phosphorylation is induced by both EGF and insulin. In terms of tissue distribution, expressed in aortic endothelial cells.

It is found in the nucleus. Its subcellular location is the cytoplasm. It localises to the golgi apparatus membrane. The protein resides in the cell membrane. The protein localises to the membrane. It is found in the caveola. May act as a scaffolding protein within caveolar membranes. Interacts directly with G-protein alpha subunits and can functionally regulate their activity. Acts as an accessory protein in conjunction with CAV1 in targeting to lipid rafts and driving caveolae formation. Positive regulator of cellular mitogenesis of the MAPK signaling pathway. Required for the insulin-stimulated nuclear translocation and activation of MAPK1 and STAT3, and the subsequent regulation of cell cycle progression. The polypeptide is Caveolin-2 (CAV2) (Bos taurus (Bovine)).